A 526-amino-acid polypeptide reads, in one-letter code: Choline/ethanolamine transporter FLVCR2 (526 aa).

The disordered stretch occupies residues 1–70; that stretch reads MVNEGPNQEE…PSGLAHPSSS (70 aa). Residues 1–76 lie on the Cytoplasmic side of the membrane; it reads MVNEGPNQEE…PSSSGPEDLS (76 aa). 1–84 serves as a coordination point for heme b; sequence MVNEGPNQEE…LSVIKVSRRR (84 aa). Repeat copies occupy residues 25 to 30, 31 to 36, 37 to 42, 43 to 48, and 49 to 54. Residues 25–56 show a composition bias toward low complexity; that stretch reads PSVSVHPSVSVHPSVSINPSVSVHPSSSAHPS. The interval 25 to 72 is 8 X 6 AA tandem repeats of P-S-[VS]-S-[VIAG]-[HNP]; sequence PSVSVHPSVSVHPSVSINPSVSVHPSSSAHPSALAQPSGLAHPSSSGP. The stretch at 55–60 is one 6; approximate repeat; sequence PSALAQ. The 7; approximate repeat unit spans residues 61 to 66; the sequence is PSGLAH. Repeat 8 spans residues 67-72; the sequence is PSSSGP. Residues 77 to 101 traverse the membrane as a helical segment; it reads VIKVSRRRWAVVLVFSCYSMCNSFQ. Choline is bound by residues Asn98 and Trp102. The Extracellular segment spans residues 102 to 119; that stretch reads WIQYGSINNIFMHFYGVS. Residues 120–147 form a helical membrane-spanning segment; sequence AFAIDWLSMCYMLTYIPLLLPVAWLLEK. Residues 148-149 lie on the Cytoplasmic side of the membrane; that stretch reads FG. Residues 150–169 traverse the membrane as a helical segment; sequence LRTIALTGSALNCLGAWVKL. At 170-176 the chain is on the extracellular side; it reads GSLKPHL. A helical membrane pass occupies residues 177–205; it reads FPVTVVGQLICSVAQVFILGMPSRIASVW. Residues Gln191 and Leu195 each coordinate choline. Residues 206 to 210 lie on the Cytoplasmic side of the membrane; sequence FGANE. Residues 211–236 form a helical membrane-spanning segment; it reads VSTACSVAVFGNQLGIAIGFLVPPVL. Residues 237 to 241 lie on the Extracellular side of the membrane; that stretch reads VPNIE. A helical transmembrane segment spans residues 242–271; it reads DRDELAYHISIMFYIIGGVATLLLILVIIV. Residues 272-307 are Cytoplasmic-facing; it reads FKEKPKYPPSRAQSLSYALTSPDASYLGSIARLFKN. A helical transmembrane segment spans residues 308–338; sequence LNFVLLVITYGLNAGAFYALSTLLNRMVIWH. Tyr325 lines the choline pocket. Residues 339 to 342 lie on the Extracellular side of the membrane; the sequence is YPGE. A helical transmembrane segment spans residues 343 to 371; the sequence is EVNAGRIGLTIVIAGMLGAVISGIWLDRS. At 372-373 the chain is on the cytoplasmic side; it reads KT. The helical transmembrane segment at 374 to 396 threads the bilayer; it reads YKETTLVVYIMTLVGMVVYTFTL. At 397–399 the chain is on the extracellular side; sequence NLG. The helical transmembrane segment at 400-429 threads the bilayer; the sequence is HLWVVFITAGTMGFFMTGYLPLGFEFAVEL. At 430-437 the chain is on the cytoplasmic side; that stretch reads TYPESEGI. Residues 438 to 463 traverse the membrane as a helical segment; it reads SSGLLNISAQVFGIIFTISQGQIIDN. Gln447 is a binding site for choline. Residues 464 to 465 lie on the Extracellular side of the membrane; it reads YG. A helical membrane pass occupies residues 466 to 488; that stretch reads TKPGNIFLCVFLTLGAALTAFIK. At 489–526 the chain is on the cytoplasmic side; sequence ADLRRQKANKETLENKLQEEEEESNTSKVPTAVSEDHL. Residues 500–526 form a disordered region; that stretch reads TLENKLQEEEEESNTSKVPTAVSEDHL. Ser515 is subject to Phosphoserine.

The protein belongs to the major facilitator superfamily. Feline leukemia virus subgroup C receptor (TC 2.A.1.28.1) family. As to quaternary structure, interacts with components of electron transfer chain complexes III, IV and V including CYC1, NDUFA4, COX4I1, ATP5PD and ATP5F1C; these interactions occur in the absence of heme and are disrupted upon heme binding. Interacts with ATP2A2; this interaction occurs in the absence of heme and promotes ATP2A2 proteasomal degradation; the complex is dissociated upon heme binding. Interacts with HMOX1; this interaction is potentiated in the presence of heme. As to expression, expressed in non-hematopoietic tissues, with relative abundant expression in brain, placenta, lung, liver and kidney. Also expressed in hematopoietic tissues (fetal liver, spleen, lymph node, thymus, leukocytes and bone marrow). Found in acidophil cells of the pituitary that secrete growth hormone and prolactin (at protein level).

It is found in the cell membrane. Its subcellular location is the mitochondrion membrane. The protein resides in the endoplasmic reticulum membrane. It catalyses the reaction choline(out) = choline(in). The catalysed reaction is ethanolamine(in) = ethanolamine(out). The enzyme catalyses heme b(in) = heme b(out). Its function is as follows. Choline uniporter that specifically mediates choline uptake at the blood-brain-barrier. Responsible for the majority of choline uptake across the blood-brain-barrier from the circulation into the brain. Choline, a nutrient critical for brain development, is a precursor of phosphatidylcholine, as well as betaine. Also mediates transport of ethanolamine. Choline and ethanolamine transport is not coupled with proton transport and is exclusively driven by the choline gradient across the plasma membrane. However, the presence of an inwardly directed proton gradient enhances choline uptake. Also acts as a heme b transporter. Required to regulate mitochondrial respiration processes, ATP synthesis and thermogenesis. At low heme levels, interacts with components of electron transfer chain (ETC) complexes and ATP2A2, leading to ubiquitin-mediated degradation of ATP2A2 and inhibition of thermogenesis. Upon heme binding, dissociates from ETC complexes to allow switching from mitochondrial ATP synthesis to thermogenesis. The polypeptide is Choline/ethanolamine transporter FLVCR2 (Homo sapiens (Human)).